The following is a 198-amino-acid chain: MAVSSEQIKDLRERTGAGMMDCKKALEEKGGDIEKAVTYLREKGLAKAAKRAGRETGEGKVIAYVHGTGKTGVLVELNCETDFVANNEAFEALGKEIALQITAMSPLYVSEESIPKSEIENEMSVQKALLEKEGKKADQIEKILPGKMKKYYEDICLIHQKSIRDNSKTINDLLQEAIAKFGENITVGRFSRFQVGGN.

The tract at residues 81–84 is involved in Mg(2+) ion dislocation from EF-Tu; sequence TDFV.

The protein belongs to the EF-Ts family.

The protein resides in the cytoplasm. Its function is as follows. Associates with the EF-Tu.GDP complex and induces the exchange of GDP to GTP. It remains bound to the aminoacyl-tRNA.EF-Tu.GTP complex up to the GTP hydrolysis stage on the ribosome. The protein is Elongation factor Ts of Leptospira biflexa serovar Patoc (strain Patoc 1 / Ames).